A 384-amino-acid chain; its full sequence is Mitogen-activated protein kinase homolog 1 (384 aa).

Positions 32 to 319 constitute a Protein kinase domain; it reads YVPIKPIGRG…VMEALQHPYM (288 aa). Residues 38-46 and Lys-61 contribute to the ATP site; that span reads IGRGAYGIV. Asp-158 (proton acceptor) is an active-site residue. Thr-191 carries the post-translational modification Phosphothreonine. The TXY motif lies at 191 to 193; the sequence is TEY. Tyr-193 is modified (phosphotyrosine).

Belongs to the protein kinase superfamily. CMGC Ser/Thr protein kinase family. MAP kinase subfamily. It depends on Mg(2+) as a cofactor. Post-translationally, dually phosphorylated on Thr-191 and Tyr-193, which activates the enzyme. As to expression, expressed in vegetative organs such as leaf, root, or stem. In the reproductive organs, it is found in the ovary, but not in the stamen.

It carries out the reaction L-seryl-[protein] + ATP = O-phospho-L-seryl-[protein] + ADP + H(+). The enzyme catalyses L-threonyl-[protein] + ATP = O-phospho-L-threonyl-[protein] + ADP + H(+). Activated by tyrosine and threonine phosphorylation. In Petunia hybrida (Petunia), this protein is Mitogen-activated protein kinase homolog 1 (MPK1).